A 267-amino-acid chain; its full sequence is 2-keto-3-deoxy-L-rhamnonate aldolase (267 aa).

The active-site Proton acceptor is the H49. Substrate is bound at residue Q151. E153 is a Mg(2+) binding site. Substrate contacts are provided by A178 and D179. D179 is a Mg(2+) binding site.

This sequence belongs to the HpcH/HpaI aldolase family. KDR aldolase subfamily. Homohexamer. Requires Mg(2+) as cofactor.

The catalysed reaction is 2-dehydro-3-deoxy-L-rhamnonate = (S)-lactaldehyde + pyruvate. Functionally, catalyzes the reversible retro-aldol cleavage of 2-keto-3-deoxy-L-rhamnonate (KDR) to pyruvate and lactaldehyde. The sequence is that of 2-keto-3-deoxy-L-rhamnonate aldolase from Escherichia coli O6:K15:H31 (strain 536 / UPEC).